An 86-amino-acid polypeptide reads, in one-letter code: MAEDIKTKIKNYKTAPFDSRFPNQNQTRNCWQNYLDFHRCEKAMTAKGGDVSVCEWYRRVYKSLCPISWVSTWDDRRAEGTFPGKI.

Ala-2 carries the N-acetylalanine modification. The CHCH domain maps to 27–73 (TRNCWQNYLDFHRCEKAMTAKGGDVSVCEWYRRVYKSLCPISWVSTW). A Cx9C motif motif is present at residues 30-40 (CWQNYLDFHRC). 2 disulfides stabilise this stretch: Cys-30–Cys-65 and Cys-40–Cys-54. The short motif at 54–65 (CEWYRRVYKSLC) is the Cx10C motif element. N6-acetyllysine is present on Lys-62.

Belongs to the cytochrome c oxidase subunit 6B family. As to quaternary structure, component of the cytochrome c oxidase (complex IV, CIV), a multisubunit enzyme composed of 14 subunits. The complex is composed of a catalytic core of 3 subunits MT-CO1, MT-CO2 and MT-CO3, encoded in the mitochondrial DNA, and 11 supernumerary subunits COX4I, COX5A, COX5B, COX6A, COX6B, COX6C, COX7A, COX7B, COX7C, COX8 and NDUFA4, which are encoded in the nuclear genome. The complex exists as a monomer or a dimer and forms supercomplexes (SCs) in the inner mitochondrial membrane with NADH-ubiquinone oxidoreductase (complex I, CI) and ubiquinol-cytochrome c oxidoreductase (cytochrome b-c1 complex, complex III, CIII), resulting in different assemblies (supercomplex SCI(1)III(2)IV(1) and megacomplex MCI(2)III(2)IV(2)).

The protein resides in the mitochondrion inner membrane. It functions in the pathway energy metabolism; oxidative phosphorylation. Component of the cytochrome c oxidase, the last enzyme in the mitochondrial electron transport chain which drives oxidative phosphorylation. The respiratory chain contains 3 multisubunit complexes succinate dehydrogenase (complex II, CII), ubiquinol-cytochrome c oxidoreductase (cytochrome b-c1 complex, complex III, CIII) and cytochrome c oxidase (complex IV, CIV), that cooperate to transfer electrons derived from NADH and succinate to molecular oxygen, creating an electrochemical gradient over the inner membrane that drives transmembrane transport and the ATP synthase. Cytochrome c oxidase is the component of the respiratory chain that catalyzes the reduction of oxygen to water. Electrons originating from reduced cytochrome c in the intermembrane space (IMS) are transferred via the dinuclear copper A center (CU(A)) of subunit 2 and heme A of subunit 1 to the active site in subunit 1, a binuclear center (BNC) formed by heme A3 and copper B (CU(B)). The BNC reduces molecular oxygen to 2 water molecules using 4 electrons from cytochrome c in the IMS and 4 protons from the mitochondrial matrix. The chain is Cytochrome c oxidase subunit 6B1 (COX6B1) from Carlito syrichta (Philippine tarsier).